We begin with the raw amino-acid sequence, 445 residues long: WD repeat domain phosphoinositide-interacting protein 2 (445 aa).

The WD 1 repeat unit spans residues Ala182–Glu222. The L/FRRG motif motif lies at Phe223 to Gly226. 2 WD repeats span residues Lys228–Pro267 and Gly311–Cys349. Position 395 is a phosphoserine (Ser395).

It belongs to the WD repeat PROPPIN family. In terms of assembly, interacts with TECPR1. Interacts with ATG16L1. Interacts with ATG5. Interacts with WIPI1. Interacts with WDR45. May interact with NUDC. Interacts with ULK1 and RB1CC1.

The protein localises to the preautophagosomal structure membrane. Component of the autophagy machinery that controls the major intracellular degradation process by which cytoplasmic materials are packaged into autophagosomes and delivered to lysosomes for degradation. Involved in an early step of the formation of preautophagosomal structures. Binds and is activated by phosphatidylinositol 3-phosphate (PtdIns3P) forming on membranes of the endoplasmic reticulum upon activation of the upstream ULK1 and PI3 kinases. Mediates ER-isolation membranes contacts by interacting with the ULK1:RB1CC1 complex and PtdIns3P. Once activated, WIPI2 recruits at phagophore assembly sites the ATG12-ATG5-ATG16L1 complex that directly controls the elongation of the nascent autophagosomal membrane. The sequence is that of WD repeat domain phosphoinositide-interacting protein 2 from Mus musculus (Mouse).